The following is a 441-amino-acid chain: GTPase Der (441 aa).

EngA-type G domains are found at residues 2 to 164 and 173 to 343; these read HKVA…PADD and IRIS…DKWQ. GTP-binding positions include 8–15, 55–59, 116–119, 179–186, 226–230, and 288–291; these read GRPNVGKS, DTGGL, NKID, DTAGI, and NKWD.

This sequence belongs to the TRAFAC class TrmE-Era-EngA-EngB-Septin-like GTPase superfamily. EngA (Der) GTPase family. Associates with the 50S ribosomal subunit.

GTPase that plays an essential role in the late steps of ribosome biogenesis. This is GTPase Der from Deinococcus deserti (strain DSM 17065 / CIP 109153 / LMG 22923 / VCD115).